A 401-amino-acid polypeptide reads, in one-letter code: Ninja-family protein MODD (401 aa).

Disordered regions lie at residues Lys-95–Arg-135 and Thr-215–Pro-238. Residues Arg-105–Ser-130 show a composition bias toward low complexity. Over residues Asn-217–His-226 the composition is skewed to polar residues.

This sequence belongs to the Ninja family. Interacts with BZIP46, TPR3 and PUB70.

The protein localises to the nucleus. Its function is as follows. Acts as a negative regulator of abscisic acid (ABA) signaling and drought tolerance. Mediates deactivation and degradation of BZIP46, a positive regulator of ABA signaling and drought stress tolerance. Represses BZIP46 activity via interaction with the TPR3-HDAC1 corepressor complex and down-regulation of the histone acetylation level at BZIP46 target genes. Promotes BZIP46 degradation via interaction with the U-box type ubiquitin E3 ligase PUB70. The polypeptide is Ninja-family protein MODD (Oryza sativa subsp. japonica (Rice)).